Consider the following 133-residue polypeptide: Phosphoribosyl-AMP cyclohydrolase (133 aa).

A Mg(2+)-binding site is contributed by aspartate 77. Zn(2+) is bound at residue cysteine 78. Mg(2+) is bound by residues aspartate 79 and aspartate 81. Zn(2+) is bound by residues cysteine 95 and cysteine 102.

It belongs to the PRA-CH family. In terms of assembly, homodimer. Mg(2+) is required as a cofactor. The cofactor is Zn(2+).

It localises to the cytoplasm. It carries out the reaction 1-(5-phospho-beta-D-ribosyl)-5'-AMP + H2O = 1-(5-phospho-beta-D-ribosyl)-5-[(5-phospho-beta-D-ribosylamino)methylideneamino]imidazole-4-carboxamide. Its pathway is amino-acid biosynthesis; L-histidine biosynthesis; L-histidine from 5-phospho-alpha-D-ribose 1-diphosphate: step 3/9. Functionally, catalyzes the hydrolysis of the adenine ring of phosphoribosyl-AMP. The chain is Phosphoribosyl-AMP cyclohydrolase from Azotobacter vinelandii (strain DJ / ATCC BAA-1303).